The chain runs to 144 residues: uncharacterized protein (144 aa).

The stretch at 48 to 119 (ELNKLKAKAD…KETEEPKMEL (72 aa)) forms a coiled coil.

This is an uncharacterized protein from Archaeoglobus fulgidus (strain ATCC 49558 / DSM 4304 / JCM 9628 / NBRC 100126 / VC-16).